A 475-amino-acid chain; its full sequence is ADP-ribosyltransferase toxin AexT (475 aa).

Positions 93 to 226 (VSPEDLQRLM…LQRAVKAEVA (134 aa)) constitute a Bacterial Rho-GAP domain. The 177-residue stretch at 260–436 (EGLQEQFGLE…RVLEEASLGE (177 aa)) folds into the TR mART core domain. Residues arginine 340, serine 364, and glutamate 403 contribute to the active site.

Its subcellular location is the secreted. Its function is as follows. Directly involved in the toxicity for RTG-2 (rainbow trout gonad) fish cells. This chain is ADP-ribosyltransferase toxin AexT (aexT), found in Aeromonas salmonicida.